The following is a 394-amino-acid chain: Elongation factor Tu (394 aa).

A tr-type G domain is found at 10–204; it reads KPHVNVGTIG…ALDNYIPEPE (195 aa). The interval 19 to 26 is G1; that stretch reads GHVDHGKT. 19 to 26 contributes to the GTP binding site; it reads GHVDHGKT. Threonine 26 contacts Mg(2+). The segment at 60–64 is G2; it reads GITIS. Positions 81-84 are G3; the sequence is DCPG. GTP-binding positions include 81–85 and 136–139; these read DCPGH and NKCD. Residues 136–139 are G4; that stretch reads NKCD. Residues 174–176 form a G5 region; the sequence is SAL.

Belongs to the TRAFAC class translation factor GTPase superfamily. Classic translation factor GTPase family. EF-Tu/EF-1A subfamily. In terms of assembly, monomer.

It localises to the cytoplasm. The catalysed reaction is GTP + H2O = GDP + phosphate + H(+). Its function is as follows. GTP hydrolase that promotes the GTP-dependent binding of aminoacyl-tRNA to the A-site of ribosomes during protein biosynthesis. The sequence is that of Elongation factor Tu from Idiomarina loihiensis (strain ATCC BAA-735 / DSM 15497 / L2-TR).